Reading from the N-terminus, the 1281-residue chain is Protein ETHYLENE-INSENSITIVE 2 (1281 aa).

Topologically, residues 1 to 21 (MDGQQLRSSESPASGGGGVTG) are cytoplasmic. Residues 22 to 42 (GGAPHLFHALGPALLISIGYI) traverse the membrane as a helical segment. Residues 43–61 (DLGKWVAAVEAGSRFGLDL) lie on the Extracellular side of the membrane. A helical transmembrane segment spans residues 62-82 (VLLALLFNFMAILCQYLAACI). The Cytoplasmic portion of the chain corresponds to 83–112 (GTVTGRSLAEICHQEYSRPTCIFLGVQAGL). The chain crosses the membrane as a helical span at residues 113 to 133 (SLLTSELTMIFGIALGFNLLF). Residues 134-137 (EYDD) lie on the Extracellular side of the membrane. A helical membrane pass occupies residues 138–158 (LITGICFATVVPNLLPYAISH). Residues 159–163 (LGKKM) are Cytoplasmic-facing. The helical transmembrane segment at 164 to 184 (VGTLNACIAGFALLCYVLGLL) threads the bilayer. At 185-208 (VSQPQIPLTTNVIFPKLSGESAYS) the chain is on the extracellular side. The chain crosses the membrane as a helical span at residues 209–229 (LMALLGANVMAHNFYIHSSVV). Topologically, residues 230–238 (QGQKRSAFA) are cytoplasmic. The chain crosses the membrane as a helical span at residues 239-259 (VGALFHDHLFSVLFIFTGIFL). The Extracellular portion of the chain corresponds to 260–297 (VNHVLMNSAAADSTNTLLLTFQDVVELMNQIFVNPMAP). The helical transmembrane segment at 298–318 (TIFLVVLLFSSHIISLTSAIG) threads the bilayer. Residues 319 to 325 (SQVISQH) lie on the Cytoplasmic side of the membrane. A helical transmembrane segment spans residues 326–346 (LFGINLPLSGHHLILKAFAIV). Residues 347 to 362 (PALYCAKVAGAEGIYQ) are Extracellular-facing. A helical membrane pass occupies residues 363–383 (LLIICQIIQAMLLPSSVVPLF). At 384 to 400 (RVASSRLIMGAHRVSLH) the chain is on the cytoplasmic side. A helical transmembrane segment spans residues 401–421 (LEILTFLAFLLMLFSNIIFMA). Residues 422 to 447 (EMLFGDSGWLNTLKGNTGSPVVFPST) lie on the Extracellular side of the membrane. The chain crosses the membrane as a helical span at residues 448-468 (VLITVACVSVAFSLYMAVTPL). The Cytoplasmic segment spans residues 469-1281 (KSGSHEAELQ…KRRLSSKGQQ (813 aa)). 2 disordered regions span residues 540 to 565 (IESD…SPSF) and 593 to 665 (ESTV…NGSG). A compositionally biased stretch (polar residues) spans 548-557 (HSTAHTSTAP). The span at 599–610 (VDSKSTGERDIE) shows a compositional bias: basic and acidic residues.

It belongs to the NRAMP (TC 2.A.55) family. In terms of tissue distribution, expressed in roots, leaf sheaths, leaf blades, flowers, developing seeds, germinating seeds and young seedlings. Expressed in adventitious roots, vascular tissues of the seminal roots, lateral roots, the connecting region between vascular tissues and lateral roots, mature leaf, mature stem, tips of adventitious roots derived from the node, shoot apex, young panicle, anthers, pistil, stigma, ovary, seed coat and fruit coat pericarp.

Its subcellular location is the membrane. Its function is as follows. Central factor in ethylene signaling pathways that control development, senescence and grain size. Acts as a positive component of the ethylene-signaling pathway. The polypeptide is Protein ETHYLENE-INSENSITIVE 2 (Oryza sativa subsp. japonica (Rice)).